We begin with the raw amino-acid sequence, 380 residues long: Queuine tRNA-ribosyltransferase (380 aa).

Catalysis depends on aspartate 96, which acts as the Proton acceptor. Substrate contacts are provided by residues 96-100, aspartate 150, glutamine 193, and glycine 220; that span reads DSGGF. The segment at 251 to 257 is RNA binding; sequence GVGAPDS. Aspartate 270 serves as the catalytic Nucleophile. Residues 275–279 form an RNA binding; important for wobble base 34 recognition region; it reads TRIAR. Residues cysteine 308, cysteine 310, cysteine 313, and histidine 339 each coordinate Zn(2+).

Belongs to the queuine tRNA-ribosyltransferase family. Homodimer. Within each dimer, one monomer is responsible for RNA recognition and catalysis, while the other monomer binds to the replacement base PreQ1. The cofactor is Zn(2+).

The enzyme catalyses 7-aminomethyl-7-carbaguanine + guanosine(34) in tRNA = 7-aminomethyl-7-carbaguanosine(34) in tRNA + guanine. Its pathway is tRNA modification; tRNA-queuosine biosynthesis. Its function is as follows. Catalyzes the base-exchange of a guanine (G) residue with the queuine precursor 7-aminomethyl-7-deazaguanine (PreQ1) at position 34 (anticodon wobble position) in tRNAs with GU(N) anticodons (tRNA-Asp, -Asn, -His and -Tyr). Catalysis occurs through a double-displacement mechanism. The nucleophile active site attacks the C1' of nucleotide 34 to detach the guanine base from the RNA, forming a covalent enzyme-RNA intermediate. The proton acceptor active site deprotonates the incoming PreQ1, allowing a nucleophilic attack on the C1' of the ribose to form the product. After dissociation, two additional enzymatic reactions on the tRNA convert PreQ1 to queuine (Q), resulting in the hypermodified nucleoside queuosine (7-(((4,5-cis-dihydroxy-2-cyclopenten-1-yl)amino)methyl)-7-deazaguanosine). This chain is Queuine tRNA-ribosyltransferase, found in Streptococcus pneumoniae (strain ATCC BAA-255 / R6).